A 93-amino-acid chain; its full sequence is uncharacterized protein (93 aa).

This sequence to E.coli YeaC.

This is an uncharacterized protein from Pseudoalteromonas haloplanktis (Alteromonas haloplanktis).